A 91-amino-acid chain; its full sequence is Tachykinin-like peptide (91 aa).

The first 19 residues, 1-19 (MKILVAFAVIMLVSAQVLA), serve as a signal peptide directing secretion. The propeptide occupies 20–51 (AEIGLNDEPEWYSDQIQEDLPVFENFLQRIAR). Methionine 62 is subject to Methionine amide. The tract at residues 64-91 (KRNNGFGQMSRKRSAERNTIHNYERRRK) is disordered. A propeptide spanning residues 66–91 (NNGFGQMSRKRSAERNTIHNYERRRK) is cleaved from the precursor. The span at 76-91 (RSAERNTIHNYERRRK) shows a compositional bias: basic and acidic residues.

In terms of tissue distribution, expressed by the skin glands.

It localises to the secreted. Tachykinins are active peptides which excite neurons, evoke behavioral responses, are potent vasodilators and secretagogues, and contract (directly or indirectly) many smooth muscles. In vitro, induces contraction of guinea pig ileum smooth muscle in a dose-dependent manner. In Theloderma corticale (Kwangsi warty tree frog), this protein is Tachykinin-like peptide.